A 305-amino-acid chain; its full sequence is Ribonuclease BN (305 aa).

The Zn(2+) site is built by H64, H66, D68, H69, H141, D212, and H270. D68 (proton acceptor) is an active-site residue.

Belongs to the RNase Z family. RNase BN subfamily. As to quaternary structure, homodimer. Zn(2+) serves as cofactor.

Functionally, zinc phosphodiesterase, which has both exoribonuclease and endoribonuclease activities. The sequence is that of Ribonuclease BN from Escherichia coli O6:K15:H31 (strain 536 / UPEC).